Here is a 450-residue protein sequence, read N- to C-terminus: 23S rRNA (uracil(1939)-C(5))-methyltransferase RlmD (450 aa).

Residues Cys-81, Cys-87, Cys-90, and Cys-173 each coordinate [4Fe-4S] cluster. S-adenosyl-L-methionine is bound by residues Gln-276, Phe-305, Asn-310, Glu-326, Asp-353, and Asp-372. Cys-402 (nucleophile) is an active-site residue.

The protein belongs to the class I-like SAM-binding methyltransferase superfamily. RNA M5U methyltransferase family. RlmD subfamily.

The enzyme catalyses uridine(1939) in 23S rRNA + S-adenosyl-L-methionine = 5-methyluridine(1939) in 23S rRNA + S-adenosyl-L-homocysteine + H(+). Catalyzes the formation of 5-methyl-uridine at position 1939 (m5U1939) in 23S rRNA. This Idiomarina loihiensis (strain ATCC BAA-735 / DSM 15497 / L2-TR) protein is 23S rRNA (uracil(1939)-C(5))-methyltransferase RlmD.